A 987-amino-acid chain; its full sequence is Leucine--tRNA ligase (987 aa).

Residues 69–80 (PYPSGKGLHVGH) carry the 'HIGH' region motif. A 'KMSKS' region motif is present at residues 760 to 764 (KMGKS). Lys-763 serves as a coordination point for ATP.

The protein belongs to the class-I aminoacyl-tRNA synthetase family.

It is found in the cytoplasm. It carries out the reaction tRNA(Leu) + L-leucine + ATP = L-leucyl-tRNA(Leu) + AMP + diphosphate. In Bifidobacterium longum (strain NCC 2705), this protein is Leucine--tRNA ligase.